We begin with the raw amino-acid sequence, 462 residues long: Zinc finger CCCH domain-containing protein 34 (462 aa).

Positions M1–R13 are enriched in basic and acidic residues. Residues M1–E26 form a disordered region. 3 C3H1-type zinc fingers span residues R54–D82, R100–Q128, and R148–P176. The span at T288–E303 shows a compositional bias: polar residues. The segment at T288–Q310 is disordered. C3H1-type zinc fingers lie at residues R307–D335 and R353–S381. A compositionally biased stretch (low complexity) spans S405–S418. Residues S405 to S462 are disordered. Positions S446–S462 are enriched in polar residues.

It localises to the nucleus. The sequence is that of Zinc finger CCCH domain-containing protein 34 from Arabidopsis thaliana (Mouse-ear cress).